Reading from the N-terminus, the 62-residue chain is Large ribosomal subunit protein bL35 (62 aa).

The disordered stretch occupies residues 25-62 (EQAYRSHLSQNKTTKQKRQARKSVQMHSSDVKRFKALI). Positions 53–62 (SDVKRFKALI) are enriched in basic and acidic residues.

Belongs to the bacterial ribosomal protein bL35 family.

The polypeptide is Large ribosomal subunit protein bL35 (Mycoplasmopsis fermentans (Mycoplasma fermentans)).